The primary structure comprises 239 residues: MIVFILLSLAAVLQQSVADVDFQSESPRRTEKQTEIVDMHNSFRRSVNPTARNMLKMEWYPEAADNAERWAYQCIYDHSANYERVIGGIQCGENIYKSSNPRAWSEMIQDWYDEYKNFVYGVGANPPGSMIGHYTQIVWYKSYRIGCAAAYCPSYPYNYFYVCQYCPVGNMEGLTATPYTSGPTCADCPSHCDDGLCTNPCPINNVFTNCDSLLQQSSCEDSYITTNCGASCFCQDKII.

The N-terminal stretch at M1–A18 is a signal peptide. Residues V37–Y165 enclose the SCP domain. Disulfide bonds link C74-C152, C91-C166, C147-C163, C185-C192, C188-C197, C210-C228, and C219-C232. Residues C201–C234 enclose the ShKT domain.

The protein belongs to the CRISP family. In terms of tissue distribution, expressed by the venom gland.

The protein resides in the secreted. In terms of biological role, blocks contraction of smooth muscle elicited by high potassium-induced depolarization, but does not block caffeine-stimulated contraction. May target voltage-gated calcium channels on smooth muscle. In Cerberus rynchops (Dog-faced water snake), this protein is Cysteine-rich venom protein.